Consider the following 338-residue polypeptide: MISNSQLDLGISFVGSGSATPQKIIKNDQLGQRVDTNDEWIQTRTGIGQRRVIGENESLIDLATDAAVNAVKMADWDVQTIDLIILATSTPEDLFGSAPKIQSNLGASNAVAFDLTAACSGFLFALVTASQYLASGSMKRALVIGADQLSKWVDWDDRKTCVLFGDGAGAVALESSGDESGLIGYDLKSDGSKGGCLNLSQSNVFLDLVQGANHQKGEYLPIKMEGKEVYKFAVKEVPIILGEILEKCQIKSESIDWLLLHQANQRILDAVASRFSIPSEKVLSNLKYYGNTSAATIPLMLDEAVRDKRIKSGDLIACSGFGAGLSWGAALFYWHGPY.

Residues Cys119 and His261 contribute to the active site. The segment at 262–266 is ACP-binding; the sequence is QANQR. Asn291 is a catalytic residue.

Belongs to the thiolase-like superfamily. FabH family. As to quaternary structure, homodimer.

The protein resides in the cytoplasm. It carries out the reaction malonyl-[ACP] + acetyl-CoA + H(+) = 3-oxobutanoyl-[ACP] + CO2 + CoA. The protein operates within lipid metabolism; fatty acid biosynthesis. In terms of biological role, catalyzes the condensation reaction of fatty acid synthesis by the addition to an acyl acceptor of two carbons from malonyl-ACP. Catalyzes the first condensation reaction which initiates fatty acid synthesis and may therefore play a role in governing the total rate of fatty acid production. Possesses both acetoacetyl-ACP synthase and acetyl transacylase activities. Its substrate specificity determines the biosynthesis of branched-chain and/or straight-chain of fatty acids. In Prochlorococcus marinus (strain NATL2A), this protein is Beta-ketoacyl-[acyl-carrier-protein] synthase III.